The primary structure comprises 538 residues: Sensor protein CitS (538 aa).

The Cytoplasmic segment spans residues 1–13 (MKRRLFPLTFSAK). A helical transmembrane segment spans residues 14–34 (MMGFIALLIIAMFVLLGVFLN). Residues 35–174 (EQYARTLEEQ…DIQQVIGERL (140 aa)) are Extracellular-facing. Residues 175–195 (IAMWQIVVVIMILGLMGTWLV) traverse the membrane as a helical segment. Over 196–538 (ANTVKKATLG…TIPKHEAKEG (343 aa)) the chain is Cytoplasmic. Residues 216 to 282 (QQKEAILQSI…PEVLQVGKGQ (67 aa)) enclose the PAS domain. In terms of domain architecture, Histidine kinase spans 339-534 (AQTHEFSNKL…CFVLTIPKHE (196 aa)). At His-342 the chain carries Phosphohistidine; by autocatalysis.

The protein resides in the cell membrane. It carries out the reaction ATP + protein L-histidine = ADP + protein N-phospho-L-histidine.. In terms of biological role, member of the two-component regulatory system CitT/CitS. Functions probably as a membrane-associated protein kinase that phosphorylates CitT in response to environmental citrate or Mg(2+)-citrate complex. This chain is Sensor protein CitS (citS), found in Halalkalibacterium halodurans (strain ATCC BAA-125 / DSM 18197 / FERM 7344 / JCM 9153 / C-125) (Bacillus halodurans).